The primary structure comprises 257 residues: 3-alpha-hydroxysteroid dehydrogenase/carbonyl reductase (257 aa).

Residues 8 to 13 (GCATGI), D32, 41 to 42 (DL), and G71 each bind NAD(+). Residue S114 participates in substrate binding. NAD(+)-binding residues include Y155 and K159. Y155 (proton acceptor) is an active-site residue.

It belongs to the short-chain dehydrogenases/reductases (SDR) family. In terms of assembly, homodimer.

Its subcellular location is the cytoplasm. It carries out the reaction a 3alpha-hydroxysteroid + NADP(+) = a 3-oxosteroid + NADPH + H(+). The catalysed reaction is a 3alpha-hydroxysteroid + NAD(+) = a 3-oxosteroid + NADH + H(+). In terms of biological role, catalyzes the reversible interconversion of hydroxy and oxo groups at position 3 of the steroid nucleus. Along with the 3 alpha-hydroxysteroid dehydrogenase and 3-oxo-reductase activities towards a variety of cis or trans fused A/B ring steroids, it also reduces several xenobiotic carbonyl compounds, including a metyrapone-based class of insecticides, to the respective alcohol metabolites. No detectable activity on testosterone, progesterone or 3-oxo-desogestrel. The protein is 3-alpha-hydroxysteroid dehydrogenase/carbonyl reductase (hsdA) of Comamonas testosteroni (Pseudomonas testosteroni).